We begin with the raw amino-acid sequence, 520 residues long: AAA-ATPase At5g57480 (520 aa).

The signal sequence occupies residues 1 to 24 (MKEYWTSLASLLGVLAFCQSLMQS). 244-251 (GPPGTGKS) contributes to the ATP binding site. Disordered regions lie at residues 307–340 (KKNS…EEGG) and 467–520 (NVKD…TRED). Residues 328-340 (SGSGSGGSGEEGG) are compositionally biased toward gly residues. The segment covering 497-512 (QNEDEDHDEEEIELED) has biased composition (acidic residues).

Belongs to the AAA ATPase family. BCS1 subfamily. It depends on Mg(2+) as a cofactor.

It carries out the reaction ATP + H2O = ADP + phosphate + H(+). In Arabidopsis thaliana (Mouse-ear cress), this protein is AAA-ATPase At5g57480.